The sequence spans 351 residues: Cytoplasmic dynein 2 light intermediate chain 1 (351 aa).

Residues 304–335 (TLKAIQDPARDPQYAESEVDEMRVQKDQELEQ) are disordered. The segment covering 323–335 (DEMRVQKDQELEQ) has biased composition (basic and acidic residues).

Belongs to the dynein light intermediate chain family. In terms of assembly, light intermediate chain of the cytoplasmic dynein complex 2, a multisubunit complex composed at least of eleven different proteins. The cytoplasmic dynein 2 complex consists of two catalytic heavy chains (HCs) and a number of non-catalytic subunits presented by intermediate chains (ICs), light intermediate chains (LICs) and light chains (LCs). Among them, a heavy chain (DYNC2H1), two intermediate chains (DYNC2I2 and DYNC2I1), a light intermediate chain (DYNC2LI1), and a light chain (DYNLT2B) are unique to the dynein-2 complex, but a subset of light chains are also shared by dynein-1 and dynein-2 complexes. Dynein-2 complex is built around two copies of cytoplasmic dynein 2 heavy chain 1 (DYNC2H1). The C-terminal region forms the motor domain, which converts the energy from ATP hydrolysis into movement. Its N-terminal region forms the tail, an extended structure that binds the other subunits and holds the two heavy chains in a homodimer. Interacts with DYNC2H1 (via N-terminus); this interaction stabilizes the dynein-2 complex structure.

The protein localises to the cytoplasm. Its subcellular location is the cell projection. It localises to the cilium. The protein resides in the cytoskeleton. It is found in the cilium basal body. The protein localises to the cilium axoneme. Its subcellular location is the microtubule organizing center. It localises to the centrosome. Acts as one of several non-catalytic accessory components of the cytoplasmic dynein 2 complex (dynein-2 complex), a motor protein complex that drives the movement of cargos along microtubules within cilia and flagella in concert with the intraflagellar transport (IFT) system, facilitating the assembly of these organelles. Involved in the regulation of ciliary length. The sequence is that of Cytoplasmic dynein 2 light intermediate chain 1 (Dync2li1) from Rattus norvegicus (Rat).